Reading from the N-terminus, the 139-residue chain is Aspartate 1-decarboxylase (139 aa).

Ser25 functions as the Schiff-base intermediate with substrate; via pyruvic acid in the catalytic mechanism. A Pyruvic acid (Ser) modification is found at Ser25. Position 57 (Thr57) interacts with substrate. Tyr58 acts as the Proton donor in catalysis. Position 73-75 (73-75 (GAA)) interacts with substrate.

This sequence belongs to the PanD family. As to quaternary structure, heterooctamer of four alpha and four beta subunits. It depends on pyruvate as a cofactor. In terms of processing, is synthesized initially as an inactive proenzyme, which is activated by self-cleavage at a specific serine bond to produce a beta-subunit with a hydroxyl group at its C-terminus and an alpha-subunit with a pyruvoyl group at its N-terminus.

The protein resides in the cytoplasm. The enzyme catalyses L-aspartate + H(+) = beta-alanine + CO2. It functions in the pathway cofactor biosynthesis; (R)-pantothenate biosynthesis; beta-alanine from L-aspartate: step 1/1. In terms of biological role, catalyzes the pyruvoyl-dependent decarboxylation of aspartate to produce beta-alanine. In Mycobacterium bovis (strain BCG / Tokyo 172 / ATCC 35737 / TMC 1019), this protein is Aspartate 1-decarboxylase.